The chain runs to 342 residues: Renalase (342 aa).

The N-terminal stretch at 1-17 (MSRVLVVGAGLTGSLCA) is a signal peptide. Residues T12, R42, and 61–62 (QY) contribute to the FAD site.

The protein belongs to the renalase family. The cofactor is FAD. As to expression, expressed predominantly in kidney and testis with lower levels in liver, heart and embryo and weak expression in brain and skeletal muscle.

The protein localises to the secreted. The enzyme catalyses 1,2-dihydro-beta-NAD + O2 + H(+) = H2O2 + NAD(+). The catalysed reaction is 1,2-dihydro-beta-NADP + O2 + H(+) = H2O2 + NADP(+). It carries out the reaction 1,6-dihydro-beta-NADP + O2 + H(+) = H2O2 + NADP(+). It catalyses the reaction 1,6-dihydro-beta-NAD + O2 + H(+) = H2O2 + NAD(+). Catalyzes the oxidation of the less abundant 1,2-dihydro-beta-NAD(P) and 1,6-dihydro-beta-NAD(P) to form beta-NAD(P)(+). The enzyme hormone is secreted by the kidney, and circulates in blood and modulates cardiac function and systemic blood pressure. Lowers blood pressure in vivo by decreasing cardiac contractility and heart rate and preventing a compensatory increase in peripheral vascular tone, suggesting a causal link to the increased plasma catecholamine and heightened cardiovascular risk. High concentrations of catecholamines activate plasma renalase and promotes its secretion and synthesis. The protein is Renalase of Mus musculus (Mouse).